A 146-amino-acid polypeptide reads, in one-letter code: Protein new-glue 3 (146 aa).

A signal peptide spans methionine 1–glycine 23. The tract at residues glycine 23–serine 146 is disordered. Low complexity predominate over residues serine 24 to serine 66. 4 consecutive repeat copies span residues threonine 31 to threonine 38, threonine 39 to threonine 46, threonine 47 to threonine 53, and threonine 54 to threonine 61. The interval threonine 31–threonine 61 is 4 X 8 AA approximate tandem repeats of T-S-A-S-A-T-T-T. Positions lysine 67 to arginine 92 are enriched in basic residues. The segment covering histidine 93–serine 106 has biased composition (basic and acidic residues). The segment covering serine 116–serine 132 has biased composition (low complexity). Over residues arginine 133–serine 146 the composition is skewed to basic residues.

As to expression, salivary gland specific.

The protein resides in the secreted. This Drosophila melanogaster (Fruit fly) protein is Protein new-glue 3 (ng3).